The following is a 248-amino-acid chain: PF03932 family protein CutC (248 aa).

It belongs to the CutC family. As to quaternary structure, homodimer.

It is found in the cytoplasm. In Escherichia coli O45:K1 (strain S88 / ExPEC), this protein is PF03932 family protein CutC.